A 72-amino-acid chain; its full sequence is DNA gyrase inhibitor YacG (72 aa).

Positions 14, 17, 33, and 37 each coordinate Zn(2+).

This sequence belongs to the DNA gyrase inhibitor YacG family. In terms of assembly, interacts with GyrB. Zn(2+) serves as cofactor.

Inhibits all the catalytic activities of DNA gyrase by preventing its interaction with DNA. Acts by binding directly to the C-terminal domain of GyrB, which probably disrupts DNA binding by the gyrase. The chain is DNA gyrase inhibitor YacG from Mannheimia succiniciproducens (strain KCTC 0769BP / MBEL55E).